A 506-amino-acid polypeptide reads, in one-letter code: Galactose/methyl galactoside import ATP-binding protein MglA (506 aa).

ABC transporter domains follow at residues 14–249 (LEMS…VGRS) and 264–506 (VILE…SLHL). 46–53 (GENGAGKS) lines the ATP pocket.

The protein belongs to the ABC transporter superfamily. Galactose/methyl galactoside importer (TC 3.A.1.2.3) family. In terms of assembly, the complex is composed of one ATP-binding protein (MglA), two transmembrane proteins (MglC) and a solute-binding protein (MglB).

The protein localises to the cell inner membrane. The catalysed reaction is D-galactose(out) + ATP + H2O = D-galactose(in) + ADP + phosphate + H(+). It carries out the reaction methyl beta-D-galactoside(out) + ATP + H2O = methyl beta-D-galactoside(in) + ADP + phosphate + H(+). Its function is as follows. Part of the ABC transporter complex MglABC involved in galactose/methyl galactoside import. Responsible for energy coupling to the transport system. This is Galactose/methyl galactoside import ATP-binding protein MglA from Shigella boydii serotype 4 (strain Sb227).